The primary structure comprises 69 residues: Sec-independent protein translocase protein TatA (69 aa).

A helical transmembrane segment spans residues 1-21 (MFGLGGQELVLILLIILLLFG). Residues 48–69 (EELNKAVDDTPEKEKKSSSEKS) form a disordered region.

It belongs to the TatA/E family. As to quaternary structure, forms a complex with TatC.

It is found in the cell inner membrane. Part of the twin-arginine translocation (Tat) system that transports large folded proteins containing a characteristic twin-arginine motif in their signal peptide across membranes. TatA could form the protein-conducting channel of the Tat system. This is Sec-independent protein translocase protein TatA from Chlorobium phaeobacteroides (strain BS1).